Consider the following 276-residue polypeptide: C-type lectin domain family 12 member B (276 aa).

Over Met1–Ala43 the chain is Cytoplasmic. The ITIM motif motif lies at Met5 to Leu10. Tyr7 carries the post-translational modification Phosphotyrosine. A helical; Signal-anchor for type II membrane protein transmembrane segment spans residues Leu44–Phe64. Over Leu65–Asp276 the chain is Extracellular. Residues Asn91, Asn176, and Asn237 are each glycosylated (N-linked (GlcNAc...) asparagine). Residues Tyr150–Glu264 form the C-type lectin domain. Cystine bridges form between Cys172–Cys263 and Cys242–Cys255.

Homodimer. Interacts (via ITIM motif) with PTPN6. Interacts (via ITIM motif) with PTPN11; this interaction triggers dephosphorylation and activation of PTPN11.

Its subcellular location is the cell membrane. Its function is as follows. Inhibitory receptor postulated to negatively regulate immune and non-immune functions. Upon phosphorylation, recruits SH2 domain-containing PTPN6 and PTPN11 phosphatases to its ITIM motif and antagonizes activation signals. Although it inhibits KLRK1/NKG2D-mediated signaling, it does not bind known ligands of KLRK1/NKG2D and therefore is not its inhibitory counterpart. May limit activation of myeloid cell subsets in response to infection or tissue inflammation. May protect target cells against natural killer cell-mediated lysis. May negatively regulate cell cycle and differentiation of melanocytes via inactivation of STAT3. In Bos taurus (Bovine), this protein is C-type lectin domain family 12 member B (CLEC12B).